The following is a 388-amino-acid chain: tRNA (guanine(26)-N(2))-dimethyltransferase (388 aa).

The 375-residue stretch at 7 to 381 (KTVEEGLTKI…APLKKIKEII (375 aa)) folds into the Trm1 methyltransferase domain. Positions 40, 70, 88, 115, and 116 each coordinate S-adenosyl-L-methionine. Positions 248, 251, 268, and 271 each coordinate Zn(2+).

Belongs to the class I-like SAM-binding methyltransferase superfamily. Trm1 family.

It carries out the reaction guanosine(26) in tRNA + 2 S-adenosyl-L-methionine = N(2)-dimethylguanosine(26) in tRNA + 2 S-adenosyl-L-homocysteine + 2 H(+). Dimethylates a single guanine residue at position 26 of a number of tRNAs using S-adenosyl-L-methionine as donor of the methyl groups. This is tRNA (guanine(26)-N(2))-dimethyltransferase from Methanobrevibacter smithii (strain ATCC 35061 / DSM 861 / OCM 144 / PS).